The following is a 150-amino-acid chain: Probable histone H2A.5 (150 aa).

Low complexity predominate over residues 1–12 (MESSQATTKPTR). Disordered regions lie at residues 1–28 (MESS…SVSK) and 130–150 (KSTA…PKKA). The span at 131–150 (STASSSQAEKASATKSPKKA) shows a compositional bias: polar residues. The residue at position 146 (serine 146) is a Phosphoserine. Positions 146 to 149 (SPKK) match the SPKK motif motif.

The protein belongs to the histone H2A family. As to quaternary structure, the nucleosome is a histone octamer containing two molecules each of H2A, H2B, H3 and H4 assembled in one H3-H4 heterotetramer and two H2A-H2B heterodimers. The octamer wraps approximately 147 bp of DNA. Post-translationally, not ubiquitinated.

It localises to the nucleus. The protein resides in the chromosome. Core component of nucleosome. Nucleosomes wrap and compact DNA into chromatin, limiting DNA accessibility to the cellular machineries which require DNA as a template. Histones thereby play a central role in transcription regulation, DNA repair, DNA replication and chromosomal stability. DNA accessibility is regulated via a complex set of post-translational modifications of histones, also called histone code, and nucleosome remodeling. The sequence is that of Probable histone H2A.5 from Arabidopsis thaliana (Mouse-ear cress).